The sequence spans 262 residues: Ribosomal RNA small subunit methyltransferase A (262 aa).

Residues asparagine 14, leucine 16, glycine 41, glutamate 62, aspartate 87, and asparagine 109 each contribute to the S-adenosyl-L-methionine site.

This sequence belongs to the class I-like SAM-binding methyltransferase superfamily. rRNA adenine N(6)-methyltransferase family. RsmA subfamily.

The protein resides in the cytoplasm. The enzyme catalyses adenosine(1518)/adenosine(1519) in 16S rRNA + 4 S-adenosyl-L-methionine = N(6)-dimethyladenosine(1518)/N(6)-dimethyladenosine(1519) in 16S rRNA + 4 S-adenosyl-L-homocysteine + 4 H(+). Specifically dimethylates two adjacent adenosines (A1518 and A1519) in the loop of a conserved hairpin near the 3'-end of 16S rRNA in the 30S particle. May play a critical role in biogenesis of 30S subunits. The protein is Ribosomal RNA small subunit methyltransferase A of Francisella tularensis subsp. tularensis (strain FSC 198).